Reading from the N-terminus, the 94-residue chain is MLKPLGDRLVLKVEEKEQTVGGFVLAGSAQEKTKTAQVVATGQGVRTLNGDLVAPSVKTGDRVLVEAHAGLDVKDGDEKYIIVGEANILAIIEE.

This sequence belongs to the GroES chaperonin family. In terms of assembly, heptamer of 7 subunits arranged in a ring. Interacts with the chaperonin GroEL.

The protein resides in the cytoplasm. Functionally, together with the chaperonin GroEL, plays an essential role in assisting protein folding. The GroEL-GroES system forms a nano-cage that allows encapsulation of the non-native substrate proteins and provides a physical environment optimized to promote and accelerate protein folding. GroES binds to the apical surface of the GroEL ring, thereby capping the opening of the GroEL channel. This Streptococcus pneumoniae (strain ATCC 700669 / Spain 23F-1) protein is Co-chaperonin GroES.